A 735-amino-acid polypeptide reads, in one-letter code: DNA replication licensing factor mcm5-A (735 aa).

The region spanning Ile-332 to Met-538 is the MCM domain. An ADP-binding site is contributed by Arg-372. The Arginine finger motif lies at Ser-513–Asp-516.

Belongs to the MCM family. As to quaternary structure, component of the mcm2-7 complex (RLF-M). The complex forms a toroidal hexameric ring with the proposed subunit order mcm2-mcm6-mcm4-mcm7-mcm3-mcm5. The heterodimer of mmcm3/mcm5 interacts with mcm4, mmcm6, mcm7 and weakly with mcm2. Component of the CMG helicase complex, composed of the mcm2-7 complex, the GINS complex and cdc45.

The protein localises to the nucleus. Its subcellular location is the chromosome. It carries out the reaction ATP + H2O = ADP + phosphate + H(+). In terms of biological role, acts as a component of the MCM2-7 complex (MCM complex) which is the replicative helicase essential for 'once per cell cycle' DNA replication initiation and elongation in eukaryotic cells. Core component of CDC45-MCM-GINS (CMG) helicase, the molecular machine that unwinds template DNA during replication, and around which the replisome is built. The active ATPase sites in the MCM2-7 ring are formed through the interaction surfaces of two neighboring subunits such that a critical structure of a conserved arginine finger motif is provided in trans relative to the ATP-binding site of the Walker A box of the adjacent subunit. The six ATPase active sites, however, are likely to contribute differentially to the complex helicase activity. The polypeptide is DNA replication licensing factor mcm5-A (mcm5-a) (Xenopus laevis (African clawed frog)).